A 598-amino-acid chain; its full sequence is MFS transporter L2 (598 aa).

3 helical membrane passes run 83-103 (IAAF…ATSI), 122-142 (FWAG…LGSF), and 150-170 (SLIY…AVAN). N171 carries an N-linked (GlcNAc...) asparagine glycan. The next 5 helical transmembrane spans lie at 183–203 (GVGG…TVPL), 212–232 (FFGM…GAFA), 239–259 (WVFW…TVFL), 277–297 (WIGM…ITWG), and 309–329 (LVPL…QEKF). N342 carries N-linked (GlcNAc...) asparagine glycosylation. 6 consecutive transmembrane segments (helical) span residues 346–366 (ALLY…LYFM), 383–403 (VALF…GIAI), 411–431 (WANW…ILLK), 439–459 (WIFL…AMAL), 476–496 (MFSF…GVVF), and 550–570 (YIWI…LFID).

The protein belongs to the major facilitator superfamily.

Its subcellular location is the membrane. MFS transporter; part of the gene cluster that mediates the biosynthesis of squalestatin S1 (SQS1, also known as zaragozic acid A), a lead compound for the treatment of hyper-cholesterolemia by targeting squalene synthase (SS). This is MFS transporter L2 from Phoma sp. (strain ATCC 20986 / MF5453).